Here is a 452-residue protein sequence, read N- to C-terminus: Bifunctional purine biosynthesis protein PurH (452 aa).

In terms of domain architecture, MGS-like spans 1-115 (MKRILVSLYE…KNWKKVKPAF (115 aa)).

It belongs to the PurH family.

It carries out the reaction (6R)-10-formyltetrahydrofolate + 5-amino-1-(5-phospho-beta-D-ribosyl)imidazole-4-carboxamide = 5-formamido-1-(5-phospho-D-ribosyl)imidazole-4-carboxamide + (6S)-5,6,7,8-tetrahydrofolate. It catalyses the reaction IMP + H2O = 5-formamido-1-(5-phospho-D-ribosyl)imidazole-4-carboxamide. Its pathway is purine metabolism; IMP biosynthesis via de novo pathway; 5-formamido-1-(5-phospho-D-ribosyl)imidazole-4-carboxamide from 5-amino-1-(5-phospho-D-ribosyl)imidazole-4-carboxamide (10-formyl THF route): step 1/1. It functions in the pathway purine metabolism; IMP biosynthesis via de novo pathway; IMP from 5-formamido-1-(5-phospho-D-ribosyl)imidazole-4-carboxamide: step 1/1. This Thermotoga maritima (strain ATCC 43589 / DSM 3109 / JCM 10099 / NBRC 100826 / MSB8) protein is Bifunctional purine biosynthesis protein PurH.